Here is a 247-residue protein sequence, read N- to C-terminus: Phosphoglycerate mutase 1 (247 aa).

Substrate is bound by residues 8–15 (RHGQSEWN) and 21–22 (TG). The active-site Tele-phosphohistidine intermediate is His9. Ser12 is modified (phosphoserine). Residue Lys31 forms a Glycyl lysine isopeptide (Lys-Gly) (interchain with G-Cter in ubiquitin) linkage. Tyr49 carries the phosphotyrosine modification. Lys57 participates in a covalent cross-link: Glycyl lysine isopeptide (Lys-Gly) (interchain with G-Cter in ubiquitin). Position 60 (Arg60) interacts with substrate. Lys71 participates in a covalent cross-link: Glycyl lysine isopeptide (Lys-Gly) (interchain with G-Cter in ubiquitin). The active-site Proton donor/acceptor is Glu87. Substrate contacts are provided by residues 87 to 90 (ERHY), Lys98, and 114 to 115 (RR). Residues Ser116, Ser127, and Ser128 each carry the phosphoserine modification. Glycyl lysine isopeptide (Lys-Gly) (interchain with G-Cter in ubiquitin) cross-links involve residues Lys139 and Lys175. Position 183–184 (183–184 (GN)) interacts with substrate. Ser185 carries the phosphoserine modification. Lys191 participates in a covalent cross-link: Glycyl lysine isopeptide (Lys-Gly) (interchain with G-Cter in ubiquitin). Residue Ser197 is modified to Phosphoserine.

This sequence belongs to the phosphoglycerate mutase family. BPG-dependent PGAM subfamily. As to quaternary structure, homotetramer: dimer of dimers.

The protein resides in the cytoplasm. It localises to the mitochondrion outer membrane. Its subcellular location is the mitochondrion intermembrane space. The catalysed reaction is (2R)-2-phosphoglycerate = (2R)-3-phosphoglycerate. It participates in carbohydrate degradation; glycolysis; pyruvate from D-glyceraldehyde 3-phosphate: step 3/5. With respect to regulation, inhibited by inositol hexakisphosphate and benzene tri-, tetra- and hexacarboxylates. Functionally, interconversion of 3- and 2-phosphoglycerate with 2,3-bisphosphoglycerate as the primer of the reaction. Can also catalyze the reaction of EC 5.4.2.4 (synthase), but with a reduced activity. The polypeptide is Phosphoglycerate mutase 1 (GPM1) (Saccharomyces cerevisiae (strain ATCC 204508 / S288c) (Baker's yeast)).